A 311-amino-acid polypeptide reads, in one-letter code: Purine nucleoside phosphorylase (311 aa).

Ser-2 is modified (N-acetylserine). Residues Ser-46, His-81, 101-103 (RLH), and Ala-134 contribute to the phosphate site. Glu-219 is a binding site for a purine D-ribonucleoside. Residue Ser-238 coordinates phosphate. Residue Asn-261 participates in a purine D-ribonucleoside binding. Ser-275 carries the post-translational modification Phosphoserine.

The protein belongs to the PNP/MTAP phosphorylase family.

It carries out the reaction a purine D-ribonucleoside + phosphate = a purine nucleobase + alpha-D-ribose 1-phosphate. It participates in purine metabolism; purine nucleoside salvage. In terms of biological role, the purine nucleoside phosphorylases catalyze the phosphorolytic breakdown of the N-glycosidic bond in the beta-(deoxy)ribonucleoside molecules, with the formation of the corresponding free purine bases and pentose-1-phosphate. Cleaves guanosine and inosine. The sequence is that of Purine nucleoside phosphorylase (PNP1) from Saccharomyces cerevisiae (strain ATCC 204508 / S288c) (Baker's yeast).